Here is a 311-residue protein sequence, read N- to C-terminus: MQAPPPEHCPGVESEQAGKGSACAGCPNQGVCSDPNKKLEDPGKALVVESMKDVSNKLLILSGKGGVGKSTVTSLLTRYLARSNPDSNFGVLDIDICGPSQPRLMGALGESVHQSGYGWSPVGIEDNVCLMSIGFLLDSVDDAIIWRGPKKNGMIRQFLSEVDWGNLDLLLLDTPPGTSDEHLSVVSYLKDDTNPESLRAVMVTTPQEVSLLDVRKEINFCKKQNIPIVGVIENMSSFRCGHCGNSSEIFPAKTGGAAAMCAEMGIPLLGSLPLDQQISKACDSGEDLTEFKNVTTEALEGICSKIMASFS.

[4Fe-4S] cluster-binding residues include Cys-9, Cys-23, Cys-26, and Cys-32. 63 to 70 (GKGGVGKS) lines the ATP pocket. 2 residues coordinate [4Fe-4S] cluster: Cys-240 and Cys-243.

The protein belongs to the Mrp/NBP35 ATP-binding proteins family. NUBP1/NBP35 subfamily. Heterotetramer of 2 Nubp1 and 2 Nubp2 chains. [4Fe-4S] cluster is required as a cofactor.

It localises to the cytoplasm. Its function is as follows. Component of the cytosolic iron-sulfur (Fe/S) protein assembly (CIA) machinery. Required for maturation of extramitochondrial Fe-S proteins. The Nubp1-Nubp2 heterotetramer forms a Fe-S scaffold complex, mediating the de novo assembly of an Fe-S cluster and its transfer to target apoproteins. In Drosophila yakuba (Fruit fly), this protein is Cytosolic Fe-S cluster assembly factor Nubp1 homolog.